Reading from the N-terminus, the 732-residue chain is Protein DIA2 (732 aa).

TPR repeat units follow at residues 15–48 (VLKAIELGTRLFKSGEYLQAKRIFTNALRVCDSY), 78–111 (IKILDNICACYEKLNDLKSCLDVSQRLLKLEPGN), and 113–145 (KCYIRCTRTLIKLKDWKRAYKTCSRGLQLCNND). The region spanning 204-251 (TDLVGNLPIEILPIIFQRFTTKELVTLSLVCNKWRDKILYHLDCFQEF) is the F-box domain. Position 393 is a phosphoserine (S393). 7 LRR repeats span residues 425-449 (LEKITLICDKKKIKNFPLCRALLRG), 480-505 (FPDLKELWIEDNDNCELSKFLQLLKF), 509-532 (WKNLEKLTFRENKLYPIVNLDEDQ), 550-574 (LQNLEKLDLMGTSISGSALTRLCEQ), 579-602 (GRKLRSLNIGNCPNIQFPNNHAHT), 616-637 (LSKLEEINLSHLSSLNDSTMKS), and 645-669 (LENLKRLDISHNFEITGISIYEFLK).

It belongs to the DIA2 family. Component of the SCF(DIA2) complex containing CDC53, SKP1, RBX1 and DIA2. Interacts with SKP1.

It is found in the nucleus. Functionally, F-box protein component of a SCF (SKP1-CUL1-F-box protein) E3 ubiquitin-protein ligase complex which mediates the ubiquitination and subsequent proteasomal degradation of target proteins. Probably recognizes and binds to phosphorylated target proteins. The SCF(DIA2) complex is specifically involved in the pheromone induced degradation of phosphorylated TEC1. The SCF(DIA2) complex binds to DNA replication origins. Involved in DNA replication, genome stability, and the control of cell cycle, probably through its association to replication origins to facilitate the ubiquitination of another origin-binding protein. Required for invasive growth and growth under alkaline conditions. The protein is Protein DIA2 (DIA2) of Saccharomyces cerevisiae (strain ATCC 204508 / S288c) (Baker's yeast).